The primary structure comprises 341 residues: L-threonine 3-dehydrogenase (341 aa).

Cys38 contributes to the Zn(2+) binding site. Active-site charge relay system residues include Thr40 and His43. Positions 63, 64, 93, 96, 99, and 107 each coordinate Zn(2+). NAD(+) is bound by residues Ile175, Asp195, Arg200, 262–264 (LGI), and 286–287 (IY).

The protein belongs to the zinc-containing alcohol dehydrogenase family. As to quaternary structure, homotetramer. The cofactor is Zn(2+).

It is found in the cytoplasm. The catalysed reaction is L-threonine + NAD(+) = (2S)-2-amino-3-oxobutanoate + NADH + H(+). It functions in the pathway amino-acid degradation; L-threonine degradation via oxydo-reductase pathway; glycine from L-threonine: step 1/2. Functionally, catalyzes the NAD(+)-dependent oxidation of L-threonine to 2-amino-3-ketobutyrate. The polypeptide is L-threonine 3-dehydrogenase (Idiomarina loihiensis (strain ATCC BAA-735 / DSM 15497 / L2-TR)).